An 87-amino-acid chain; its full sequence is Acyl carrier protein 3 (87 aa).

Positions 1–79 constitute a Carrier domain; the sequence is MSNPTVLDQI…DLVTYIEAAL (79 aa). S39 bears the O-(pantetheine 4'-phosphoryl)serine mark.

The protein belongs to the acyl carrier protein (ACP) family. 4'-phosphopantetheine is transferred from CoA to a specific serine of apo-ACP by AcpS. This modification is essential for activity because fatty acids are bound in thioester linkage to the sulfhydryl of the prosthetic group.

The protein resides in the cytoplasm. It functions in the pathway lipid metabolism; fatty acid biosynthesis. Functionally, carrier of the growing fatty acid chain in fatty acid biosynthesis. In Ralstonia nicotianae (strain ATCC BAA-1114 / GMI1000) (Ralstonia solanacearum), this protein is Acyl carrier protein 3.